The primary structure comprises 293 residues: Probable metal transport system membrane protein CT_417 (293 aa).

7 helical membrane-spanning segments follow: residues 18-38 (SLLA…YIVV), 41-61 (IVSI…IALW), 68-88 (LPIS…ICIG), 101-121 (IISM…SKLP), 135-155 (ILWV…FIVA), 187-207 (LLLI…GVIL), and 242-262 (FLGI…IAIL).

The protein belongs to the ABC-3 integral membrane protein family.

It localises to the cell inner membrane. Part of an ATP-driven transport system CT_415/CT_416/CT_417 for a metal. The chain is Probable metal transport system membrane protein CT_417 from Chlamydia trachomatis serovar D (strain ATCC VR-885 / DSM 19411 / UW-3/Cx).